We begin with the raw amino-acid sequence, 290 residues long: Acetyl-coenzyme A carboxylase carboxyl transferase subunit beta (290 aa).

The CoA carboxyltransferase N-terminal domain occupies 28–290 (IMTKCPKCKK…SRGGDEWHTN (263 aa)). Residues C32, C35, C51, and C54 each contribute to the Zn(2+) site. A C4-type zinc finger spans residues 32–54 (CPKCKKIMYTKELVKNLRVCISC).

Belongs to the AccD/PCCB family. In terms of assembly, acetyl-CoA carboxylase is a heterohexamer composed of biotin carboxyl carrier protein (AccB), biotin carboxylase (AccC) and two subunits each of ACCase subunit alpha (AccA) and ACCase subunit beta (AccD). Requires Zn(2+) as cofactor.

The protein localises to the cytoplasm. It carries out the reaction N(6)-carboxybiotinyl-L-lysyl-[protein] + acetyl-CoA = N(6)-biotinyl-L-lysyl-[protein] + malonyl-CoA. Its pathway is lipid metabolism; malonyl-CoA biosynthesis; malonyl-CoA from acetyl-CoA: step 1/1. Its function is as follows. Component of the acetyl coenzyme A carboxylase (ACC) complex. Biotin carboxylase (BC) catalyzes the carboxylation of biotin on its carrier protein (BCCP) and then the CO(2) group is transferred by the transcarboxylase to acetyl-CoA to form malonyl-CoA. The polypeptide is Acetyl-coenzyme A carboxylase carboxyl transferase subunit beta (Anoxybacillus flavithermus (strain DSM 21510 / WK1)).